The following is a 626-amino-acid chain: Chaperone protein HtpG (626 aa).

Positions 1-341 (MRKKKFKAES…SEDLSLNISR (341 aa)) are a; substrate-binding. A b region spans residues 342–552 (EMLQHDRQLK…DGEVTIEMEK (211 aa)). Residues 553 to 626 (VLNAMPDSQQ…FTNDICKVMV (74 aa)) form a c region.

Belongs to the heat shock protein 90 family. As to quaternary structure, homodimer.

The protein resides in the cytoplasm. In terms of biological role, molecular chaperone. Has ATPase activity. The sequence is that of Chaperone protein HtpG from Bacillus velezensis (strain DSM 23117 / BGSC 10A6 / LMG 26770 / FZB42) (Bacillus amyloliquefaciens subsp. plantarum).